The sequence spans 270 residues: tRNA pseudouridine synthase A (270 aa).

The active-site Nucleophile is the D60. An RNA binding region spans residues F107 to F111. Y118 serves as a coordination point for substrate. The interval Q168 to R172 is interaction with tRNA.

This sequence belongs to the tRNA pseudouridine synthase TruA family. Homodimer.

It catalyses the reaction uridine(38/39/40) in tRNA = pseudouridine(38/39/40) in tRNA. In terms of biological role, formation of pseudouridine at positions 38, 39 and 40 in the anticodon stem and loop of transfer RNAs. This chain is tRNA pseudouridine synthase A, found in Enterobacter sp. (strain 638).